A 471-amino-acid chain; its full sequence is Trigger factor (471 aa).

A PPIase FKBP-type domain is found at 162–243 (GDFVVMDLVA…VSQVQEQELP (82 aa)). The tract at residues 436 to 471 (LRPDGTIGEPEDEIEAETEIEIEPAAETDTEADTEQ) is disordered. Residues 444 to 471 (EPEDEIEAETEIEIEPAAETDTEADTEQ) are compositionally biased toward acidic residues.

It belongs to the FKBP-type PPIase family. Tig subfamily.

The protein resides in the cytoplasm. The enzyme catalyses [protein]-peptidylproline (omega=180) = [protein]-peptidylproline (omega=0). Functionally, involved in protein export. Acts as a chaperone by maintaining the newly synthesized protein in an open conformation. Functions as a peptidyl-prolyl cis-trans isomerase. In Nocardioides sp. (strain ATCC BAA-499 / JS614), this protein is Trigger factor.